A 308-amino-acid polypeptide reads, in one-letter code: Phenylcoumaran benzylic ether reductase TP7 (308 aa).

NADP(+) is bound by residues 11-17, Arg36, and Lys45; that span reads GGTGYIG. The active-site Proton acceptor is Lys133. Position 137 (Arg137) interacts with NADP(+).

It belongs to the NmrA-type oxidoreductase family. Isoflavone reductase subfamily. In terms of tissue distribution, expressed in flowers. Expressed at low levels in stems.

The catalysed reaction is (-)-dehydrodiconiferyl alcohol + NADPH + H(+) = (S)-isodihydrodehydrodiconiferyl alcohol + NADP(+). It carries out the reaction (+)-dehydrodiconiferyl alcohol + NADPH + H(+) = (R)-isodihydrodehydrodiconiferyl alcohol + NADP(+). It catalyses the reaction (2R,3S)-dihydrodehydrodiconiferyl alcohol + NADPH + H(+) = (S)-tetrahydrodehydrodiconiferyl alcohol + NADP(+). The enzyme catalyses (2S,3R)-dihydrodehydrodiconiferyl alcohol + NADPH + H(+) = (R)-tetrahydrodehydrodiconiferyl alcohol + NADP(+). Its function is as follows. Oxidoreductase involved in lignan biosynthesis. Catalyzes the NADPH-dependent reduction of phenylcoumaran benzylic ethers. Converts dehydrodiconiferyl alcohol (DDC) to isodihydrodehydrodiconiferyl alcohol (IDDDC), and dihydrodehydrodiconiferyl alcohol (DDDC) to tetrahydrodehydrodiconiferyl alcohol (TDDC). This chain is Phenylcoumaran benzylic ether reductase TP7, found in Nicotiana tabacum (Common tobacco).